Consider the following 240-residue polypeptide: Sorting nexin-3 (240 aa).

Residues 1 to 85 (MSAYPQDTYF…PPVQVTHSPF (85 aa)) form a disordered region. Positions 22-33 (YQPPPQPQPQQP) are enriched in pro residues. Low complexity-rich tracts occupy residues 34 to 54 (PYQQQPYQQQAYQYNAQQPYQ) and 62 to 84 (QQSPPQSSTVPPQSPPVQVTHSP). Residues 118 to 235 (SFLEIEIRNP…CAFLQDPAWD (118 aa)) form the PX domain. A 1,2-diacyl-sn-glycero-3-phospho-(1D-myo-inositol-3-phosphate) is bound by residues Arg-161, Ser-163, Lys-187, Arg-192, and Arg-201.

Belongs to the sorting nexin family.

The protein localises to the cytoplasm. It is found in the golgi apparatus membrane. The protein resides in the prevacuolar compartment membrane. Its function is as follows. Required for retention of late Golgi membrane proteins. Component of the retrieval machinery that functions by direct interaction with the cytosolic tails of certain TGN membrane proteins during the sorting/budding process at the prevacuolar compartment. Binds phosphatidylinositol 3-phosphate (PtdIns(P3)). This Cryptococcus neoformans var. neoformans serotype D (strain JEC21 / ATCC MYA-565) (Filobasidiella neoformans) protein is Sorting nexin-3 (SNX3).